Reading from the N-terminus, the 95-residue chain is Integration host factor subunit beta (95 aa).

It belongs to the bacterial histone-like protein family. Heterodimer of an alpha and a beta chain.

Functionally, this protein is one of the two subunits of integration host factor, a specific DNA-binding protein that functions in genetic recombination as well as in transcriptional and translational control. The polypeptide is Integration host factor subunit beta (Erwinia tasmaniensis (strain DSM 17950 / CFBP 7177 / CIP 109463 / NCPPB 4357 / Et1/99)).